The following is a 77-amino-acid chain: Exodeoxyribonuclease 7 small subunit (77 aa).

It belongs to the XseB family. Heterooligomer composed of large and small subunits.

The protein localises to the cytoplasm. It catalyses the reaction Exonucleolytic cleavage in either 5'- to 3'- or 3'- to 5'-direction to yield nucleoside 5'-phosphates.. In terms of biological role, bidirectionally degrades single-stranded DNA into large acid-insoluble oligonucleotides, which are then degraded further into small acid-soluble oligonucleotides. The polypeptide is Exodeoxyribonuclease 7 small subunit (Carboxydothermus hydrogenoformans (strain ATCC BAA-161 / DSM 6008 / Z-2901)).